Here is a 333-residue protein sequence, read N- to C-terminus: Ketol-acid reductoisomerase (NADP(+)) (333 aa).

Residues 1 to 179 enclose the KARI N-terminal Rossmann domain; it reads MFYDDDADLT…GGTRAGVIKT (179 aa). Residues 22-25, lysine 45, serine 48, serine 50, and 80-83 contribute to the NADP(+) site; these read YGSQ and DTAQ. Histidine 105 is a catalytic residue. Glycine 131 contributes to the NADP(+) binding site. The KARI C-terminal knotted domain maps to 180–325; the sequence is TFKDETETDL…KRLRDLMSWV (146 aa). Aspartate 188, glutamate 192, glutamate 224, and glutamate 228 together coordinate Mg(2+). Serine 249 lines the substrate pocket.

This sequence belongs to the ketol-acid reductoisomerase family. Mg(2+) serves as cofactor.

It carries out the reaction (2R)-2,3-dihydroxy-3-methylbutanoate + NADP(+) = (2S)-2-acetolactate + NADPH + H(+). The enzyme catalyses (2R,3R)-2,3-dihydroxy-3-methylpentanoate + NADP(+) = (S)-2-ethyl-2-hydroxy-3-oxobutanoate + NADPH + H(+). It participates in amino-acid biosynthesis; L-isoleucine biosynthesis; L-isoleucine from 2-oxobutanoate: step 2/4. Its pathway is amino-acid biosynthesis; L-valine biosynthesis; L-valine from pyruvate: step 2/4. Functionally, involved in the biosynthesis of branched-chain amino acids (BCAA). Catalyzes an alkyl-migration followed by a ketol-acid reduction of (S)-2-acetolactate (S2AL) to yield (R)-2,3-dihydroxy-isovalerate. In the isomerase reaction, S2AL is rearranged via a Mg-dependent methyl migration to produce 3-hydroxy-3-methyl-2-ketobutyrate (HMKB). In the reductase reaction, this 2-ketoacid undergoes a metal-dependent reduction by NADPH to yield (R)-2,3-dihydroxy-isovalerate. This is Ketol-acid reductoisomerase (NADP(+)) from Mycobacterium avium (strain 104).